A 611-amino-acid chain; its full sequence is Mitogen-activated protein kinase 10 (611 aa).

The region spanning 25 to 316 (YKIQEVIGKG…AEEALAHPYF (292 aa)) is the Protein kinase domain. ATP contacts are provided by residues 31–39 (IGKGSYGVV) and K54. D151 acts as the Proton acceptor in catalysis. T187 carries the phosphothreonine modification. The TXY motif lies at 187 to 189 (TDY). Y189 is modified (phosphotyrosine). A disordered region spans residues 394-481 (ENGGNGPVIP…RVVGPVLPYE (88 aa)). Positions 426 to 439 (EQPRIGPSRDKPSD) are enriched in basic and acidic residues.

It belongs to the protein kinase superfamily. CMGC Ser/Thr protein kinase family. MAP kinase subfamily. Post-translationally, dually phosphorylated on Thr-187 and Tyr-189, which activates the enzyme.

The enzyme catalyses L-seryl-[protein] + ATP = O-phospho-L-seryl-[protein] + ADP + H(+). The catalysed reaction is L-threonyl-[protein] + ATP = O-phospho-L-threonyl-[protein] + ADP + H(+). Activated by threonine and tyrosine phosphorylation. The protein is Mitogen-activated protein kinase 10 (MPK10) of Oryza sativa subsp. japonica (Rice).